Consider the following 301-residue polypeptide: Rhodopsin (301 aa).

Residues 1 to 18 lie on the Extracellular side of the membrane; it reads LHMIHLHWYQYPPMNPMM. The helical transmembrane segment at 19–43 threads the bilayer; that stretch reads YPLLLIFMLFTGILCLAGNFVTIWV. Residues 44–55 are Cytoplasmic-facing; it reads FMNTKSLRTPAN. A helical transmembrane segment spans residues 56–78; sequence LLVVNLAMSDFLMMFTMFPPMMV. At 79 to 92 the chain is on the extracellular side; sequence TCYYHTWTLGPTFC. An intrachain disulfide couples Cys-92 to Cys-169. A helical membrane pass occupies residues 93–115; that stretch reads QVYAFLGNLCGCASIWTMVFITF. A 'Ionic lock' involved in activated form stabilization motif is present at residues 116 to 118; that stretch reads DRY. Residues 116 to 134 are Cytoplasmic-facing; the sequence is DRYNVIVKGVAGEPLSNKK. A helical membrane pass occupies residues 135–155; that stretch reads AAMWILSVWVLSTAWCMAPFF. Topologically, residues 156–182 are extracellular; that stretch reads GWNSYVPEGNLTGCGTDYLSEDILSRS. N-linked (GlcNAc...) asparagine glycosylation is present at Asn-165. The chain crosses the membrane as a helical span at residues 183–204; it reads YLYIYSTWVYFLPLTITIYCYV. At 205-245 the chain is on the cytoplasmic side; it reads FIIKAVAAHEKGMRDQAKKMGIKSLRNEEAQKTSAECRLAK. Residues 246-267 traverse the membrane as a helical segment; it reads IAMTTVALWFIAWTPYLLINWV. Topologically, residues 268–278 are extracellular; the sequence is GMFARSYLSPV. A helical membrane pass occupies residues 279–300; the sequence is YTIWGYVFAKANAVYNPIVYAI. At Lys-288 the chain carries N6-(retinylidene)lysine.

The protein belongs to the G-protein coupled receptor 1 family. Opsin subfamily. As to quaternary structure, homodimer. Interacts with GNAQ. Contains one covalently linked retinal chromophore.

The protein localises to the cell projection. It localises to the rhabdomere membrane. Photoreceptor required for image-forming vision at low light intensity. Can use both retinal and 3-dehydroretinal as visual pigment. Light-induced isomerization of 11-cis to all-trans retinal triggers a conformational change that activates signaling via G-proteins. Signaling via GNAQ probably mediates the activation of phospholipase C. The polypeptide is Rhodopsin (RHO) (Faxonius virilis (Virile crayfish)).